A 233-amino-acid chain; its full sequence is Small ribosomal subunit protein uS2 (233 aa).

The protein belongs to the universal ribosomal protein uS2 family.

This Clostridium beijerinckii (strain ATCC 51743 / NCIMB 8052) (Clostridium acetobutylicum) protein is Small ribosomal subunit protein uS2.